The following is a 281-amino-acid chain: Bifunctional protein FolD (281 aa).

Residues 165 to 167 (GRS) and Ser-190 contribute to the NADP(+) site.

The protein belongs to the tetrahydrofolate dehydrogenase/cyclohydrolase family. As to quaternary structure, homodimer.

The enzyme catalyses (6R)-5,10-methylene-5,6,7,8-tetrahydrofolate + NADP(+) = (6R)-5,10-methenyltetrahydrofolate + NADPH. The catalysed reaction is (6R)-5,10-methenyltetrahydrofolate + H2O = (6R)-10-formyltetrahydrofolate + H(+). It participates in one-carbon metabolism; tetrahydrofolate interconversion. Functionally, catalyzes the oxidation of 5,10-methylenetetrahydrofolate to 5,10-methenyltetrahydrofolate and then the hydrolysis of 5,10-methenyltetrahydrofolate to 10-formyltetrahydrofolate. The polypeptide is Bifunctional protein FolD (Polaromonas sp. (strain JS666 / ATCC BAA-500)).